The chain runs to 1213 residues: Oligopeptidase PhomG' (1213 aa).

A Zn(2+)-binding site is contributed by His447. The active site involves Glu448. Zn(2+) is bound by residues His451 and His454.

It belongs to the peptidase M3 family. Monomer. Zn(2+) serves as cofactor.

Its pathway is mycotoxin biosynthesis. Its function is as follows. Oligopeptidase; part of the gene cluster that mediates the biosynthesis of the phomopsins, a group of hexapeptide mycotoxins which infects lupins and causes lupinosis disease in livestock. Within the pathway, phomG and phomG' are probably involved in the processing of the phomA and phomA' precursors. The pathway starts with the processing of the precursor phomA by several endopeptidases including kexin proteases as well as the cluster-specific S41 family peptidase phomP1 and the oligopeptidase phomG to produce 10 identical copies of the hexapeptide Tyr-Val-Ile-Pro-Ile-Asp. After being excised from the precursor peptide, the core peptides are cyclized and modified post-translationally by enzymes encoded within the gene cluster. The timing and order of proteolysis of the phomA precursor and PTMs are still unknown. Two tyrosinase-like enzymes, phomQ1 and phomQ2, catalyze the chlorination and hydroxylation of Tyr, respectively. PhomYb, is proposed to be involved in the construction of the macrocyclic structure. The other 4 ustYa family proteins may be involved in PTMs that generate the unique structure of phomopsin A. PhomYa is required for the hydroxylation of C-beta of Tyr. PhomYc, phomYd, and phomYe are responsible for the biosynthesis of 2,3-dehydroisoleucine (dIle), 2,3-dehydroaspartic acid (dAsp), and 3,4-dehydroproline (dPro), respectively. While dIle formation by phomYc is indispensable for the installation of dAsp by phomYd, the order of the other PTMs have not been elucidated yet. Most of the biosynthetic enzymes likely have broad substrate specificity, and thus, there might be a metabolic grid from a precursor to phomopsin A. The enzyme(s) responsible for the biosynthesis of 3,4-dehydrovaline (dVal) have also not been identified yet. Finally, phomM acts as an S-adenosylmethionine-dependent alpha-N-methyltransferase that catalyzes two successive N-methylation reactions, converting N-desmethyl-phomopsin A to phomopsin A and phomopsin A further to an N,N-dimethylated congener called phomopsin E. This chain is Oligopeptidase PhomG', found in Diaporthe leptostromiformis (Lupinosis disease fungus).